The sequence spans 344 residues: UDP-3-O-acylglucosamine N-acyltransferase (344 aa).

H250 acts as the Proton acceptor in catalysis.

Belongs to the transferase hexapeptide repeat family. LpxD subfamily. In terms of assembly, homotrimer.

The enzyme catalyses a UDP-3-O-[(3R)-3-hydroxyacyl]-alpha-D-glucosamine + a (3R)-hydroxyacyl-[ACP] = a UDP-2-N,3-O-bis[(3R)-3-hydroxyacyl]-alpha-D-glucosamine + holo-[ACP] + H(+). Its pathway is bacterial outer membrane biogenesis; LPS lipid A biosynthesis. Catalyzes the N-acylation of UDP-3-O-acylglucosamine using 3-hydroxyacyl-ACP as the acyl donor. Is involved in the biosynthesis of lipid A, a phosphorylated glycolipid that anchors the lipopolysaccharide to the outer membrane of the cell. This chain is UDP-3-O-acylglucosamine N-acyltransferase, found in Maricaulis maris (strain MCS10) (Caulobacter maris).